Reading from the N-terminus, the 182-residue chain is dCTP deaminase, dUMP-forming (182 aa).

DCTP-binding positions include 96-101 (RSSIGR), Asp-113, 121-123 (TLE), Gln-142, Tyr-156, and Gln-163. Residue Glu-123 is the Proton donor/acceptor of the active site.

The protein belongs to the dCTP deaminase family. Homotrimer.

It catalyses the reaction dCTP + 2 H2O = dUMP + NH4(+) + diphosphate. Its pathway is pyrimidine metabolism; dUMP biosynthesis; dUMP from dCTP: step 1/1. Its function is as follows. Bifunctional enzyme that catalyzes both the deamination of dCTP to dUTP and the hydrolysis of dUTP to dUMP without releasing the toxic dUTP intermediate. The protein is dCTP deaminase, dUMP-forming of Halothermothrix orenii (strain H 168 / OCM 544 / DSM 9562).